We begin with the raw amino-acid sequence, 574 residues long: MRESNVSIVWNNKASVTINTVLYDRRALDCDSEMSLMNSLSHLVYLTSTSPKIREILTMDGGLMRLMNILRAGRGQTFARMTIWQLALQCVVNVGIRGSEAIRIRVVEAGIVPIVVTLLDDFLFALESVVSHHSRFQFSLTPSTTPPPSSASAPFPINSNISNSLDSVSQHNSSADSLFVNGDVPSPFGASTASSSSRRVYSVDLRDSGDVQLPNQSTFRHSVNRDLLGSSSTTSHDRSSGSIYSNDSFQDPRVQANSPLTIQRISSAAPSTPTSTENVNYNMTTPSSPSYSRQTGPASETINDEIDSPNFFFPTPLNIMTTTQDSSRDVQLSLNNVQSQALNNRQRRNQLLPGVPSTSALLDGRRPENVVDYHGIASFFDNFDKKINKLPREEDILFGLQILAYTSKNYFHMRPYFESSKDVPSLRMSPLRSGSKTWNIFQLVEQFTLKFYPPQVQYWARAIMNNYCRKDESHGGIRRCANLLCNKWEEHSRQFAKCRRCRRTKYCSKECQHQAWPGHSRWCRVIHKDGRNSKRESSKINSVTESESTASPAASVIPVGTESVTSSTQSDSRL.

Disordered regions lie at residues 207 to 253 (DSGD…QDPR) and 283 to 307 (MTTP…DEID). Composition is skewed to polar residues over residues 243-253 (IYSNDSFQDPR) and 283-301 (MTTP…ASET). The segment at 482 to 523 (NLLCNKWEEHSRQFAKCRRCRRTKYCSKECQHQAWPGHSRWC) adopts an MYND-type; degenerate zinc-finger fold. Positions 498, 501, 519, and 523 each coordinate Zn(2+). The disordered stretch occupies residues 534 to 574 (KRESSKINSVTESESTASPAASVIPVGTESVTSSTQSDSRL). The segment covering 542–556 (SVTESESTASPAASV) has biased composition (low complexity). The segment covering 562 to 574 (ESVTSSTQSDSRL) has biased composition (polar residues).

Belongs to the MUB1/samB family.

The protein resides in the nucleus. It localises to the cytoplasm. The protein localises to the cytoskeleton. It is found in the microtubule organizing center. Its subcellular location is the spindle pole body. The sequence is that of MYND-type zinc finger protein C31F10.10c from Schizosaccharomyces pombe (strain 972 / ATCC 24843) (Fission yeast).